A 213-amino-acid chain; its full sequence is 3-isopropylmalate dehydratase small subunit (213 aa).

Belongs to the LeuD family. LeuD type 1 subfamily. In terms of assembly, heterodimer of LeuC and LeuD.

It carries out the reaction (2R,3S)-3-isopropylmalate = (2S)-2-isopropylmalate. The protein operates within amino-acid biosynthesis; L-leucine biosynthesis; L-leucine from 3-methyl-2-oxobutanoate: step 2/4. In terms of biological role, catalyzes the isomerization between 2-isopropylmalate and 3-isopropylmalate, via the formation of 2-isopropylmaleate. The polypeptide is 3-isopropylmalate dehydratase small subunit (Pseudomonas syringae pv. syringae (strain B728a)).